The chain runs to 312 residues: Dihydroorotate dehydrogenase B (NAD(+)), catalytic subunit (312 aa).

FMN-binding positions include Ser21 and 45 to 46 (KA). Residues Lys45 and 69 to 73 (NAIGL) contribute to the substrate site. FMN is bound by residues Asn99 and Asn127. A substrate-binding site is contributed by Asn127. Catalysis depends on Cys130, which acts as the Nucleophile. Residues Lys165 and Ile191 each coordinate FMN. Position 192-193 (192-193 (NT)) interacts with substrate. FMN contacts are provided by residues Gly217, 243 to 244 (GG), and 265 to 266 (GT).

The protein belongs to the dihydroorotate dehydrogenase family. Type 1 subfamily. Heterotetramer of 2 PyrK and 2 PyrD type B subunits. The cofactor is FMN.

It localises to the cytoplasm. It catalyses the reaction (S)-dihydroorotate + NAD(+) = orotate + NADH + H(+). It participates in pyrimidine metabolism; UMP biosynthesis via de novo pathway; orotate from (S)-dihydroorotate (NAD(+) route): step 1/1. Catalyzes the conversion of dihydroorotate to orotate with NAD(+) as electron acceptor. The protein is Dihydroorotate dehydrogenase B (NAD(+)), catalytic subunit (pyrD) of Anoxybacillus flavithermus (strain DSM 21510 / WK1).